Reading from the N-terminus, the 318-residue chain is Pantothenate kinase (318 aa).

96–103 (GSVAVGKS) provides a ligand contact to ATP.

It belongs to the prokaryotic pantothenate kinase family.

It localises to the cytoplasm. The enzyme catalyses (R)-pantothenate + ATP = (R)-4'-phosphopantothenate + ADP + H(+). It participates in cofactor biosynthesis; coenzyme A biosynthesis; CoA from (R)-pantothenate: step 1/5. The chain is Pantothenate kinase from Coxiella burnetii (strain CbuK_Q154) (Coxiella burnetii (strain Q154)).